Reading from the N-terminus, the 359-residue chain is Phospho-N-acetylmuramoyl-pentapeptide-transferase (359 aa).

10 consecutive transmembrane segments (helical) span residues 27–47 (GAFF…INAL), 70–90 (TPTM…LLWA), 97–117 (VWLV…DDWA), 133–153 (LAIG…VHPE), 167–187 (VLLN…VGSA), 198–218 (GLAI…AYAV), 238–258 (LLIF…YNAP), 261–281 (AVFM…AIAV), 287–307 (IVLA…IVQV), and 336–356 (QVVI…LATL).

Belongs to the glycosyltransferase 4 family. MraY subfamily. It depends on Mg(2+) as a cofactor.

The protein resides in the cell inner membrane. It catalyses the reaction UDP-N-acetyl-alpha-D-muramoyl-L-alanyl-gamma-D-glutamyl-meso-2,6-diaminopimeloyl-D-alanyl-D-alanine + di-trans,octa-cis-undecaprenyl phosphate = di-trans,octa-cis-undecaprenyl diphospho-N-acetyl-alpha-D-muramoyl-L-alanyl-D-glutamyl-meso-2,6-diaminopimeloyl-D-alanyl-D-alanine + UMP. Its pathway is cell wall biogenesis; peptidoglycan biosynthesis. Functionally, catalyzes the initial step of the lipid cycle reactions in the biosynthesis of the cell wall peptidoglycan: transfers peptidoglycan precursor phospho-MurNAc-pentapeptide from UDP-MurNAc-pentapeptide onto the lipid carrier undecaprenyl phosphate, yielding undecaprenyl-pyrophosphoryl-MurNAc-pentapeptide, known as lipid I. The polypeptide is Phospho-N-acetylmuramoyl-pentapeptide-transferase (Jannaschia sp. (strain CCS1)).